Reading from the N-terminus, the 171-residue chain is Putative defense protein (171 aa).

Residues 1-23 (MKVYACLCAAVVMLVMTSRVSEA) form the signal peptide. Residues 24 to 171 (RSTGAPLSAC…VQSAPIKIVS (148 aa)) enclose the Reelin domain. Cys-33 and Cys-110 are disulfide-bonded. Residue Asn-41 is glycosylated (N-linked (GlcNAc...) asparagine).

The protein belongs to the insect defense protein family.

The protein localises to the secreted. In terms of biological role, may have antimicrobial activity. This is Putative defense protein from Bombyx mori (Silk moth).